The primary structure comprises 265 residues: AT-hook motif nuclear-localized protein 18 (265 aa).

The tract at residues methionine 1–proline 75 is disordered. A compositionally biased stretch (basic residues) spans histidine 19–arginine 30. Positions arginine 59–lysine 71 form a DNA-binding region, a.T hook. The PPC domain maps to alanine 83–aspartate 217.

It localises to the nucleus. Its function is as follows. Transcription factor that specifically binds AT-rich DNA sequences related to the nuclear matrix attachment regions (MARs). Acts redundantly with AHL22, AHL27 and AHL29 in the regulation of flowering and regulation of the hypocotyl elongation. This Arabidopsis thaliana (Mouse-ear cress) protein is AT-hook motif nuclear-localized protein 18.